An 831-amino-acid polypeptide reads, in one-letter code: Replication restart protein PriA (831 aa).

The 168-residue stretch at 304 to 471 folds into the Helicase ATP-binding domain; the sequence is VLPLQGYHQV…HRHQNDPQRH (168 aa). Residue 317-324 participates in ATP binding; sequence GVTGSGKT. The short motif at 413–416 is the DEAH box element; sequence DEEH. Zn(2+)-binding residues include C537, C540, C546, C549, C568, C571, C581, and C584. One can recognise a Helicase C-terminal domain in the interval 575-735; sequence EIQPKVCPEC…ELPQREMLNY (161 aa).

This sequence belongs to the helicase family. PriA subfamily. Component of the replication restart primosome. Requires Zn(2+) as cofactor.

It catalyses the reaction Couples ATP hydrolysis with the unwinding of duplex DNA by translocating in the 3'-5' direction.. The catalysed reaction is ATP + H2O = ADP + phosphate + H(+). In terms of biological role, initiates the restart of stalled replication forks, which reloads the replicative helicase on sites other than the origin of replication. Recognizes and binds to abandoned replication forks and remodels them to uncover a helicase loading site. Promotes assembly of the primosome at these replication forks. This Synechocystis sp. (strain ATCC 27184 / PCC 6803 / Kazusa) protein is Replication restart protein PriA.